Here is a 37-residue protein sequence, read N- to C-terminus: Large ribosomal subunit protein bL36 (37 aa).

Belongs to the bacterial ribosomal protein bL36 family.

This chain is Large ribosomal subunit protein bL36, found in Staphylococcus aureus (strain Mu3 / ATCC 700698).